We begin with the raw amino-acid sequence, 352 residues long: Peptide chain release factor 1 (352 aa).

N5-methylglutamine is present on Gln229.

Belongs to the prokaryotic/mitochondrial release factor family. Methylated by PrmC. Methylation increases the termination efficiency of RF1.

It is found in the cytoplasm. Peptide chain release factor 1 directs the termination of translation in response to the peptide chain termination codons UAG and UAA. This is Peptide chain release factor 1 from Granulibacter bethesdensis (strain ATCC BAA-1260 / CGDNIH1).